The chain runs to 200 residues: Probable nicotinate-nucleotide adenylyltransferase (200 aa).

This sequence belongs to the NadD family.

The catalysed reaction is nicotinate beta-D-ribonucleotide + ATP + H(+) = deamido-NAD(+) + diphosphate. The protein operates within cofactor biosynthesis; NAD(+) biosynthesis; deamido-NAD(+) from nicotinate D-ribonucleotide: step 1/1. Functionally, catalyzes the reversible adenylation of nicotinate mononucleotide (NaMN) to nicotinic acid adenine dinucleotide (NaAD). This Clostridium tetani (strain Massachusetts / E88) protein is Probable nicotinate-nucleotide adenylyltransferase.